Reading from the N-terminus, the 193-residue chain is Ion-translocating oxidoreductase complex subunit A (193 aa).

A run of 6 helical transmembrane segments spans residues 5–25 (LLLLVSTVLINNFVLVKFLGL), 39–59 (VGMGLATTFVMTLASASSYLM), 63–83 (ILIPLNIAYLRTLAFILVIAV), 102–122 (LLGIFLPLITTNCAVLGVALL), 134–154 (IIYGFGAAAGFSLVLILFAAM), and 171–191 (SIAMVTAGLMSLAFMGFTGLI).

It belongs to the NqrDE/RnfAE family. The complex is composed of six subunits: RnfA, RnfB, RnfC, RnfD, RnfE and RnfG.

The protein resides in the cell inner membrane. In terms of biological role, part of a membrane-bound complex that couples electron transfer with translocation of ions across the membrane. The protein is Ion-translocating oxidoreductase complex subunit A of Aeromonas salmonicida (strain A449).